The chain runs to 196 residues: Peroxynitrite isomerase (196 aa).

A GXWXGXG motif is present at residues 46–52 (GVWRGRG). Heme b is bound at residue His186.

This sequence belongs to the nitrobindin family. In terms of assembly, homodimer. Heme b serves as cofactor.

The enzyme catalyses peroxynitrite = nitrate. Its pathway is nitrogen metabolism. Functionally, heme-binding protein able to scavenge peroxynitrite and to protect free L-tyrosine against peroxynitrite-mediated nitration, by acting as a peroxynitrite isomerase that converts peroxynitrite to nitrate. Therefore, this protein likely plays a role in peroxynitrite sensing and in the detoxification of reactive nitrogen and oxygen species (RNS and ROS, respectively). Is able to bind nitric oxide (NO) in vitro, but may act as a sensor of peroxynitrite levels in vivo. This is Peroxynitrite isomerase from Salinispora tropica (strain ATCC BAA-916 / DSM 44818 / JCM 13857 / NBRC 105044 / CNB-440).